The primary structure comprises 92 residues: MARSIKKGPFVADHLIKKIENLNAKGEKKVIITWSRASTIVPMMIGHTIAVHNGREHLPVFVTDRMVGQKLGEFSPTRTFRGHVKSDKKSRR.

Belongs to the universal ribosomal protein uS19 family.

Its subcellular location is the plastid. The protein resides in the chloroplast. Functionally, protein S19 forms a complex with S13 that binds strongly to the 16S ribosomal RNA. This is Small ribosomal subunit protein uS19c from Chaetosphaeridium globosum (Charophycean green alga).